A 366-amino-acid polypeptide reads, in one-letter code: Spermine synthase (366 aa).

The residue at position 2 (A2) is an N-acetylalanine. Position 57 is a phosphoserine (S57). The 241-residue stretch at 122-362 (RYWPTADGRL…ELWVFYTVWK (241 aa)) folds into the PABS domain. Q148 is a binding site for S-adenosyl 3-(methylsulfanyl)propylamine. The spermidine site is built by Y177 and D201. S-adenosyl 3-(methylsulfanyl)propylamine-binding positions include E220 and 255 to 256 (DC). D276 serves as the catalytic Proton acceptor. The spermidine site is built by Y351 and E353.

This sequence belongs to the spermidine/spermine synthase family. In terms of assembly, homodimer. Dimerization is mediated through the N-terminal domain and seems to be required for activity as deletion of the N-terminal domain causes complete loss of activity.

It carries out the reaction S-adenosyl 3-(methylsulfanyl)propylamine + spermidine = spermine + S-methyl-5'-thioadenosine + H(+). The protein operates within amine and polyamine biosynthesis; spermine biosynthesis; spermine from spermidine: step 1/1. Catalyzes the production of spermine from spermidine and decarboxylated S-adenosylmethionine (dcSAM). This Homo sapiens (Human) protein is Spermine synthase.